We begin with the raw amino-acid sequence, 200 residues long: Probable molybdenum cofactor guanylyltransferase (200 aa).

Residues 9-11 (LAG), lysine 21, aspartate 69, and aspartate 100 contribute to the GTP site. Mg(2+) is bound at residue aspartate 100.

This sequence belongs to the MobA family. Mg(2+) is required as a cofactor.

It localises to the cytoplasm. The catalysed reaction is Mo-molybdopterin + GTP + H(+) = Mo-molybdopterin guanine dinucleotide + diphosphate. Transfers a GMP moiety from GTP to Mo-molybdopterin (Mo-MPT) cofactor (Moco or molybdenum cofactor) to form Mo-molybdopterin guanine dinucleotide (Mo-MGD) cofactor. The chain is Probable molybdenum cofactor guanylyltransferase from Bacillus cereus (strain G9842).